A 151-amino-acid chain; its full sequence is Acidic phospholipase A2 6 (151 aa).

Residues Met1–Leu27 form the signal peptide. 7 cysteine pairs are disulfide-bonded: Cys38–Cys104, Cys54–Cys151, Cys56–Cys72, Cys71–Cys132, Cys78–Cys125, Cys88–Cys118, and Cys111–Cys123. Positions 55, 57, and 59 each coordinate Ca(2+). Residue His75 is part of the active site. A Ca(2+)-binding site is contributed by Asp76. Residue Asp126 is part of the active site.

It belongs to the phospholipase A2 family. Group I subfamily. D49 sub-subfamily. It depends on Ca(2+) as a cofactor. Expressed by the venom gland.

It localises to the secreted. It catalyses the reaction a 1,2-diacyl-sn-glycero-3-phosphocholine + H2O = a 1-acyl-sn-glycero-3-phosphocholine + a fatty acid + H(+). PLA2 catalyzes the calcium-dependent hydrolysis of the 2-acyl groups in 3-sn-phosphoglycerides. The chain is Acidic phospholipase A2 6 from Tropidechis carinatus (Australian rough-scaled snake).